The chain runs to 558 residues: Zinc finger protein piragua (558 aa).

The region spanning 15–94 is the ZAD domain; it reads STCRLCHHNT…QEREQSLQEQ (80 aa). Residues Cys-17, Cys-20, Cys-67, and Cys-70 each coordinate Zn(2+). A compositionally biased stretch (acidic residues) spans 132–177; sequence LAESSEEEFALGSDGEYENYDDDDEEEEEDYDEEDEEDGQNGEDVD. The interval 132 to 178 is disordered; it reads LAESSEEEFALGSDGEYENYDDDDEEEEEDYDEEDEEDGQNGEDVDM. C2H2-type zinc fingers lie at residues 208 to 231, 237 to 260, 266 to 288, 294 to 316, 322 to 344, 350 to 372, 414 to 436, 441 to 464, and 468 to 490; these read FLCQYCDLGFTLPAECQEHELAAH, YCCNFCNIKLVTRPALISHIKTLH, YVCAHCRKGFVRRSDLKKHTIVH, FTCNVCSKSFSRNTNLTKHMRIH, FVCQQCPRSFQTAVEMMRHTRSH, FQCGRCPYSFSRRDKLIAHQQVH, YHCDVCDRTFQRERDLQRHQALH, FACKTCNQGFNRREQLQRHELEAH, and FTCGICCISFLHQIELENHLKVH.

Its function is as follows. May be involved in transcriptional regulation. The function of this protein is unclear. According to one report, it is required for development and viability since mutants display defects in several developmental morphogenetic processes including dorsal closure and head involution, and die by the first instar larval stage. It may also be involved in fwe-mediated cellular competition. However, according to another report, it is not required for development or viability since mutants have no visible phenotype and are fertile. This chain is Zinc finger protein piragua, found in Drosophila melanogaster (Fruit fly).